Consider the following 387-residue polypeptide: Chlorophyll synthase, chloroplastic (387 aa).

Residues 1–57 (MTSILNTVSTIHSSRVTSVDRVGVLSLRNSDSVEFTRRRSGFSTLIYESPGRRFVVR) constitute a chloroplast transit peptide. A disordered region spans residues 62–81 (DTDKVKSQTPDKAPAGGSSI). 7 helical membrane passes run 182–202 (VITQ…ILDV), 210–230 (TVFY…APPL), 241–261 (FALG…LFGT), 266–286 (VVVL…VNDF), 311–331 (WICV…LLAS), 336–356 (YALA…KYFL), and 364–384 (VKYQ…TALA).

It belongs to the UbiA prenyltransferase family. Chlorophyll synthase subfamily. As to expression, low level in flower buds, flowers, stems, leaves, greening cotyledons and immature siliques, but not in mature siliques or seeds.

It is found in the plastid. The protein resides in the chloroplast membrane. The enzyme catalyses phytyl diphosphate + chlorophyllide a + H(+) = chlorophyll a + diphosphate. It participates in porphyrin-containing compound metabolism; chlorophyll biosynthesis. Its function is as follows. Involved in one of the last steps of the biosynthesis of chlorophyll a. Catalyzes the esterification of chlorophillide a or b with a preference for geranylgeranyldiphosphate (GGPP) rather than for phytyldiphosphate (PhyPP). In Arabidopsis thaliana (Mouse-ear cress), this protein is Chlorophyll synthase, chloroplastic (CHLG).